The sequence spans 62 residues: Ferredoxin-2 (62 aa).

2 consecutive 4Fe-4S ferredoxin-type domains span residues 2–28 and 29–62; these read AHRI…SAGD and SIYV…IIKV. [4Fe-4S] cluster is bound by residues C9, C12, C15, C19, C38, C41, C50, and C54.

[4Fe-4S] cluster serves as cofactor.

Functionally, ferredoxins are iron-sulfur proteins that transfer electrons in a wide variety of metabolic reactions. This is Ferredoxin-2 from Chlorobaculum tepidum (strain ATCC 49652 / DSM 12025 / NBRC 103806 / TLS) (Chlorobium tepidum).